The sequence spans 276 residues: Undecaprenyl-diphosphatase (276 aa).

8 helical membrane passes run Met1–Val21, Ala39–Phe59, Tyr84–Phe104, Leu115–Tyr135, Leu159–Gly179, Phe188–Ala208, Gln222–Leu242, and Phe253–Leu273.

The protein belongs to the UppP family.

The protein localises to the cell membrane. The catalysed reaction is di-trans,octa-cis-undecaprenyl diphosphate + H2O = di-trans,octa-cis-undecaprenyl phosphate + phosphate + H(+). Functionally, catalyzes the dephosphorylation of undecaprenyl diphosphate (UPP). Confers resistance to bacitracin. This is Undecaprenyl-diphosphatase from Mycolicibacterium smegmatis (strain ATCC 700084 / mc(2)155) (Mycobacterium smegmatis).